Here is a 748-residue protein sequence, read N- to C-terminus: ATP-dependent rRNA helicase SPB4 (748 aa).

The Q motif motif lies at 15-43; the sequence is WAKLNPPLSPWILDVINSMGFKNMTPVQA. Positions 46–260 constitute a Helicase ATP-binding domain; sequence IPRAVKNQDC…GLGLRNPVRI (215 aa). 59–66 contributes to the ATP binding site; it reads AVTGSGKT. The tract at residues 119 to 156 is disordered; that stretch reads ESEEETGDVEAHAPPFASSSRSPSPQTPDKPLFPLPML. Over residues 132–142 the composition is skewed to low complexity; sequence PPFASSSRSPS. The segment covering 143–152 has biased composition (pro residues); it reads PQTPDKPLFP. A DEAD box motif is present at residues 207 to 210; it reads DEAD. The Helicase C-terminal domain occupies 295–460; it reads KTLQLIRLLL…KAQRSILDFL (166 aa). The disordered stretch occupies residues 614–748; sequence AQRADNQSSN…IGGGMFDDLE (135 aa). Basic and acidic residues-rich tracts occupy residues 626–669 and 708–730; these read ARAE…KYEW and EIGKEYKSLKREIKEEKSVKESS. The span at 732 to 748 shows a compositional bias: gly residues; it reads GGAGGGGIGGGMFDDLE.

This sequence belongs to the DEAD box helicase family. DDX55/SPB4 subfamily. As to quaternary structure, component of pre-60S ribosomal complexes.

It is found in the nucleus. Its subcellular location is the nucleolus. It carries out the reaction ATP + H2O = ADP + phosphate + H(+). Its function is as follows. ATP-binding RNA helicase involved in the biogenesis of 60S ribosomal subunits. Binds 90S pre-ribosomal particles and dissociates from pre-60S ribosomal particles after processing of 27SB pre-rRNA. Required for the normal formation of 18S rRNA through the processing of pre-rRNAs at sites A0, A1 and A2, and the normal formation of 25S and 5.8S rRNAs through the processing of pre-rRNAs at sites C1 and C2. This is ATP-dependent rRNA helicase SPB4 from Cryptococcus neoformans var. neoformans serotype D (strain B-3501A) (Filobasidiella neoformans).